Reading from the N-terminus, the 338-residue chain is 4'-phosphopantetheinyl transferase (338 aa).

This sequence belongs to the P-Pant transferase superfamily.

The catalysed reaction is apo-[ACP] + CoA = holo-[ACP] + adenosine 3',5'-bisphosphate + H(+). Its function is as follows. Acyl-carrier-protein synthase that transfers the 4'-phosphopantetheine moiety from coenzyme A to a Ser of an acyl-carrier-protein. The 4'-phosphopantetheine (4'-PPT) portion of CoA provides the essential prosthetic group for a number of carrier proteins and multi-domain enzymes, priming them for the acceptance of acyl building blocks in fatty acid synthesis and many aspects of secondary metabolism mediated by polyketide synthases (PKSs) and non-ribosomal peptide synthetases (NRPSs). Plays a key role in liamocins biosynthesis by activationg the HR-PKS PKS1 that produces 3,5-dihydroxydecanoic acid, a precursor of liamocins. The protein is 4'-phosphopantetheinyl transferase of Aureobasidium melanogenum (Aureobasidium pullulans var. melanogenum).